Reading from the N-terminus, the 220-residue chain is Charged multivesicular body protein 2a (220 aa).

2 coiled-coil regions span residues 12–53 (EELL…MAKQ) and 198–219 (EATAALADADADLEERLNNLRR). The interval 196 to 220 (KGEATAALADADADLEERLNNLRRD) is disordered. The MIT-interacting motif motif lies at 208 to 218 (ADLEERLNNLR). Over residues 211-220 (EERLNNLRRD) the composition is skewed to basic and acidic residues.

The protein belongs to the SNF7 family. In terms of assembly, probable core component of the endosomal sorting required for transport complex III (ESCRT-III). ESCRT-III components are thought to multimerize to form a flat lattice on the perimeter membrane of the endosome.

The protein resides in the late endosome membrane. The protein localises to the cytoplasm. Probable core component of the endosomal sorting required for transport complex III (ESCRT-III) which is involved in multivesicular bodies (MVBs) formation and sorting of endosomal cargo proteins into MVBs. MVBs contain intraluminal vesicles (ILVs) that are generated by invagination and scission from the limiting membrane of the endosome and mostly are delivered to lysosomes enabling degradation of membrane proteins, such as stimulated growth factor receptors, lysosomal enzymes and lipids. The sequence is that of Charged multivesicular body protein 2a (chmp2a) from Xenopus laevis (African clawed frog).